Reading from the N-terminus, the 412-residue chain is Serine hydroxymethyltransferase (412 aa).

(6S)-5,6,7,8-tetrahydrofolate is bound by residues leucine 117 and 121–123; that span reads GHL. Lysine 226 carries the post-translational modification N6-(pyridoxal phosphate)lysine.

It belongs to the SHMT family. Homodimer. Requires pyridoxal 5'-phosphate as cofactor.

The protein resides in the cytoplasm. The catalysed reaction is (6R)-5,10-methylene-5,6,7,8-tetrahydrofolate + glycine + H2O = (6S)-5,6,7,8-tetrahydrofolate + L-serine. It participates in one-carbon metabolism; tetrahydrofolate interconversion. It functions in the pathway amino-acid biosynthesis; glycine biosynthesis; glycine from L-serine: step 1/1. Its function is as follows. Catalyzes the reversible interconversion of serine and glycine with tetrahydrofolate (THF) serving as the one-carbon carrier. This reaction serves as the major source of one-carbon groups required for the biosynthesis of purines, thymidylate, methionine, and other important biomolecules. Also exhibits THF-independent aldolase activity toward beta-hydroxyamino acids, producing glycine and aldehydes, via a retro-aldol mechanism. The chain is Serine hydroxymethyltransferase from Staphylococcus aureus (strain USA300).